The primary structure comprises 392 residues: Formate-dependent phosphoribosylglycinamide formyltransferase (392 aa).

N(1)-(5-phospho-beta-D-ribosyl)glycinamide contacts are provided by residues 22-23 and E82; that span reads EL. Residues R114, K155, 160–165, 195–198, and E203 each bind ATP; these read SSGKGQ and EGVV. In terms of domain architecture, ATP-grasp spans 119–308; sequence RLAAEELGLP…EFALHVRAFL (190 aa). Residues E267 and E279 each coordinate Mg(2+). N(1)-(5-phospho-beta-D-ribosyl)glycinamide is bound by residues D286, K355, and 362–363; that span reads RR.

It belongs to the PurK/PurT family. As to quaternary structure, homodimer.

It catalyses the reaction N(1)-(5-phospho-beta-D-ribosyl)glycinamide + formate + ATP = N(2)-formyl-N(1)-(5-phospho-beta-D-ribosyl)glycinamide + ADP + phosphate + H(+). Its pathway is purine metabolism; IMP biosynthesis via de novo pathway; N(2)-formyl-N(1)-(5-phospho-D-ribosyl)glycinamide from N(1)-(5-phospho-D-ribosyl)glycinamide (formate route): step 1/1. Its function is as follows. Involved in the de novo purine biosynthesis. Catalyzes the transfer of formate to 5-phospho-ribosyl-glycinamide (GAR), producing 5-phospho-ribosyl-N-formylglycinamide (FGAR). Formate is provided by PurU via hydrolysis of 10-formyl-tetrahydrofolate. The sequence is that of Formate-dependent phosphoribosylglycinamide formyltransferase from Salmonella typhimurium (strain LT2 / SGSC1412 / ATCC 700720).